Reading from the N-terminus, the 105-residue chain is Large ribosomal subunit protein bL21 (105 aa).

It belongs to the bacterial ribosomal protein bL21 family. As to quaternary structure, part of the 50S ribosomal subunit. Contacts protein L20.

Its function is as follows. This protein binds to 23S rRNA in the presence of protein L20. The protein is Large ribosomal subunit protein bL21 of Parabacteroides distasonis (strain ATCC 8503 / DSM 20701 / CIP 104284 / JCM 5825 / NCTC 11152).